The following is a 280-amino-acid chain: Succinate dehydrogenase [ubiquinone] iron-sulfur subunit, mitochondrial (280 aa).

A mitochondrion-targeting transit peptide spans 1–25 (MAAVCFSLSRCCSAVHRPAVTAVRF). Positions 39–129 (KKFQIYRWDP…TSKVTKIYPL (91 aa)) constitute a 2Fe-2S ferredoxin-type domain. Positions 92, 97, 100, and 112 each coordinate [2Fe-2S] cluster. The 4Fe-4S ferredoxin-type domain maps to 175-205 (DRQKLDGLYECILCACCSTSCPSYWWNADKY). C185, C188, and C191 together coordinate [4Fe-4S] cluster. [3Fe-4S] cluster is bound at residue C195. Residue W200 participates in a ubiquinone binding. C242 and C248 together coordinate [3Fe-4S] cluster. C252 provides a ligand contact to [4Fe-4S] cluster.

The protein belongs to the succinate dehydrogenase/fumarate reductase iron-sulfur protein family. As to quaternary structure, component of complex II composed of four subunits: the flavoprotein (FP) sdha, iron-sulfur protein (IP) sdhb, and a cytochrome b composed of sdhc and sdhd. Requires [2Fe-2S] cluster as cofactor. The cofactor is [3Fe-4S] cluster. It depends on [4Fe-4S] cluster as a cofactor.

The protein resides in the mitochondrion inner membrane. It catalyses the reaction a quinone + succinate = fumarate + a quinol. The catalysed reaction is (R)-malate + a quinone = enol-oxaloacetate + a quinol. It carries out the reaction (S)-malate + a quinone = enol-oxaloacetate + a quinol. The protein operates within carbohydrate metabolism; tricarboxylic acid cycle; fumarate from succinate (eukaryal route): step 1/1. With respect to regulation, enol-oxaloacetate inhibits the succinate dehydrogenase activity. Its function is as follows. Iron-sulfur protein (IP) subunit of the succinate dehydrogenase complex (mitochondrial respiratory chain complex II), responsible for transferring electrons from succinate to ubiquinone (coenzyme Q). SDH also oxidizes malate to the non-canonical enol form of oxaloacetate, enol-oxaloacetate. Enol-oxaloacetate, which is a potent inhibitor of the succinate dehydrogenase activity, is further isomerized into keto-oxaloacetate. In Danio rerio (Zebrafish), this protein is Succinate dehydrogenase [ubiquinone] iron-sulfur subunit, mitochondrial (sdhb).